A 206-amino-acid polypeptide reads, in one-letter code: Putative amino-acid transporter YggA (206 aa).

Helical transmembrane passes span 1-21, 37-57, 65-85, 116-136, 148-168, and 185-205; these read MFAT…PIGA, LLAA…GVFG, SPIG…WFGI, LGVT…LGSF, FAAG…FGAA, and TIVG…ALLA.

This sequence belongs to the LysE/ArgO transporter (TC 2.A.75) family.

It localises to the cell membrane. The protein is Putative amino-acid transporter YggA (yggA) of Aeromonas salmonicida.